Reading from the N-terminus, the 588-residue chain is Adenine deaminase (588 aa).

The protein belongs to the metallo-dependent hydrolases superfamily. Adenine deaminase family. Homodimer. The cofactor is Mn(2+).

It carries out the reaction adenine + H2O + H(+) = hypoxanthine + NH4(+). In Shigella flexneri serotype 5b (strain 8401), this protein is Adenine deaminase.